The primary structure comprises 549 residues: Undecaprenyl phosphate-alpha-4-amino-4-deoxy-L-arabinose arabinosyl transferase (549 aa).

12 consecutive transmembrane segments (helical) span residues 9 to 29, 80 to 100, 112 to 132, 136 to 156, 176 to 196, 204 to 224, 256 to 276, 288 to 308, 312 to 332, 346 to 366, 376 to 396, and 402 to 422; these read LLLI…GLWI, LFGV…LAYL, SLAC…SGYA, PQFT…LDAG, FLTK…PYML, LLGY…PWAL, PWWF…GLLP, QAPV…FSLS, LPTY…HALV, NGLL…YLQL, FELF…LAQW, and AWAA…AAMP.

This sequence belongs to the glycosyltransferase 83 family.

It localises to the cell inner membrane. The catalysed reaction is 4-amino-4-deoxy-alpha-L-arabinopyranosyl di-trans,octa-cis-undecaprenyl phosphate + lipid IVA = lipid IIA + di-trans,octa-cis-undecaprenyl phosphate.. The protein operates within lipopolysaccharide metabolism; 4-amino-4-deoxy-beta-L-arabinose-lipid A biosynthesis. Functionally, catalyzes the transfer of the L-Ara4N moiety of the glycolipid undecaprenyl phosphate-alpha-L-Ara4N to lipid A. The modified arabinose is attached to lipid A and is required for resistance to polymyxin and cationic antimicrobial peptides. This chain is Undecaprenyl phosphate-alpha-4-amino-4-deoxy-L-arabinose arabinosyl transferase, found in Pseudomonas aeruginosa (strain ATCC 15692 / DSM 22644 / CIP 104116 / JCM 14847 / LMG 12228 / 1C / PRS 101 / PAO1).